Reading from the N-terminus, the 239-residue chain is Purine nucleoside phosphorylase DeoD-type (239 aa).

His-5 lines the a purine D-ribonucleoside pocket. Phosphate-binding residues include Gly-21 and Arg-25. Lys-27 bears the N6-acetyllysine mark. Phosphate is bound by residues Arg-44 and 88-91 (RVGS). Residues 180-182 (EME) and 204-205 (SD) contribute to the a purine D-ribonucleoside site. Asp-205 serves as the catalytic Proton donor.

Belongs to the PNP/UDP phosphorylase family. In terms of assembly, homohexamer; trimer of homodimers.

The catalysed reaction is a purine D-ribonucleoside + phosphate = a purine nucleobase + alpha-D-ribose 1-phosphate. It catalyses the reaction a purine 2'-deoxy-D-ribonucleoside + phosphate = a purine nucleobase + 2-deoxy-alpha-D-ribose 1-phosphate. In terms of biological role, catalyzes the reversible phosphorolytic breakdown of the N-glycosidic bond in the beta-(deoxy)ribonucleoside molecules, with the formation of the corresponding free purine bases and pentose-1-phosphate. The protein is Purine nucleoside phosphorylase DeoD-type of Escherichia coli O8 (strain IAI1).